Consider the following 264-residue polypeptide: Apolipoprotein A-I (264 aa).

An N-terminal signal peptide occupies residues 1–18 (MKTVVLAVAVLFLTGSQA). Tandem repeats lie at residues 67-88 (LNLL…EQLG) and 89-110 (PVTQ…REMN). The tract at residues 67 to 264 (LNLLENWDTL…EEASKKLNAQ (198 aa)) is 10 X approximate tandem repeats. Methionine 109 bears the Methionine sulfoxide mark. One copy of the 3; half-length repeat lies at 111 to 121 (KDLEEVKAKVQ). 5 consecutive repeat copies span residues 122–143 (PYLD…QKME), 144–165 (PLGA…EKLT), 166–187 (PLGE…TKMT), 188–207 (PYSD…LKDS), and 208–229 (PTLA…EKAK). Methionine 193 carries the methionine sulfoxide modification. The 9; half-length repeat unit spans residues 230–240 (PALEDLRQGLM). Methionine 240 is modified (methionine sulfoxide). Copy 10 of the repeat occupies 241 to 264 (PVFESFKTRIMSMVEEASKKLNAQ).

It belongs to the apolipoprotein A1/A4/E family. As to quaternary structure, homodimer. Interacts with APOA1BP and CLU. Component of a sperm activating protein complex (SPAP), consisting of APOA1, an immunoglobulin heavy chain, an immunoglobulin light chain and albumin. Interacts with NDRG1. Interacts with SCGB3A2. Interacts with NAXE and YJEFN3. Post-translationally, glycosylated. Palmitoylated. In terms of processing, phosphorylation sites are present in the extracellular medium. As to expression, major protein of plasma HDL, also found in chylomicrons.

The protein localises to the secreted. Its function is as follows. Participates in the reverse transport of cholesterol from tissues to the liver for excretion by promoting cholesterol efflux from tissues and by acting as a cofactor for the lecithin cholesterol acyltransferase (LCAT). As part of the SPAP complex, activates spermatozoa motility. This is Apolipoprotein A-I (APOAI) from Mesocricetus auratus (Golden hamster).